The chain runs to 291 residues: 4-hydroxy-tetrahydrodipicolinate synthase (291 aa).

Pyruvate is bound at residue T44. Residue Y132 is the Proton donor/acceptor of the active site. K160 (schiff-base intermediate with substrate) is an active-site residue. Residue I202 coordinates pyruvate.

This sequence belongs to the DapA family. Homotetramer; dimer of dimers.

Its subcellular location is the cytoplasm. It carries out the reaction L-aspartate 4-semialdehyde + pyruvate = (2S,4S)-4-hydroxy-2,3,4,5-tetrahydrodipicolinate + H2O + H(+). Its pathway is amino-acid biosynthesis; L-lysine biosynthesis via DAP pathway; (S)-tetrahydrodipicolinate from L-aspartate: step 3/4. Its function is as follows. Catalyzes the condensation of (S)-aspartate-beta-semialdehyde [(S)-ASA] and pyruvate to 4-hydroxy-tetrahydrodipicolinate (HTPA). This is 4-hydroxy-tetrahydrodipicolinate synthase from Rhodospirillum centenum (strain ATCC 51521 / SW).